Consider the following 304-residue polypeptide: Large ribosomal subunit protein uL2 (304 aa).

The interval histidine 246 to tyrosine 282 is disordered. The segment covering aspartate 256 to glutamate 272 has biased composition (basic and acidic residues).

The protein belongs to the universal ribosomal protein uL2 family. As to quaternary structure, part of the 50S ribosomal subunit. Forms a bridge to the 30S subunit in the 70S ribosome.

Functionally, one of the primary rRNA binding proteins. Required for association of the 30S and 50S subunits to form the 70S ribosome, for tRNA binding and peptide bond formation. It has been suggested to have peptidyltransferase activity; this is somewhat controversial. Makes several contacts with the 16S rRNA in the 70S ribosome. The sequence is that of Large ribosomal subunit protein uL2 from Aquifex aeolicus (strain VF5).